A 108-amino-acid polypeptide reads, in one-letter code: UPF0060 membrane protein RSKD131_0092 (108 aa).

The next 4 helical transmembrane spans lie at 5–25 (LAAY…VWAW), 32–52 (ALWL…LALT), 62–82 (AVYG…VEGV), and 86–106 (RWDM…LWAP).

The protein belongs to the UPF0060 family.

Its subcellular location is the cell inner membrane. This is UPF0060 membrane protein RSKD131_0092 from Cereibacter sphaeroides (strain KD131 / KCTC 12085) (Rhodobacter sphaeroides).